We begin with the raw amino-acid sequence, 408 residues long: S-adenosylmethionine:tRNA ribosyltransferase-isomerase (408 aa).

Belongs to the QueA family. As to quaternary structure, monomer.

The protein resides in the cytoplasm. The catalysed reaction is 7-aminomethyl-7-carbaguanosine(34) in tRNA + S-adenosyl-L-methionine = epoxyqueuosine(34) in tRNA + adenine + L-methionine + 2 H(+). The protein operates within tRNA modification; tRNA-queuosine biosynthesis. In terms of biological role, transfers and isomerizes the ribose moiety from AdoMet to the 7-aminomethyl group of 7-deazaguanine (preQ1-tRNA) to give epoxyqueuosine (oQ-tRNA). This is S-adenosylmethionine:tRNA ribosyltransferase-isomerase from Trichormus variabilis (strain ATCC 29413 / PCC 7937) (Anabaena variabilis).